The chain runs to 365 residues: Selina-4(15),7(11)-diene synthase ((2E,6E)-farnesyl diphosphate cyclizing) (365 aa).

Residues Asp-82 and Glu-87 each contribute to the Mg(2+) site. The DDXXXE motif signature appears at 82–87 (DDGHCE). Arg-178 is a substrate binding site. Positions 224 and 228 each coordinate Mg(2+). A substrate-binding site is contributed by Lys-231. Residue Glu-232 coordinates Mg(2+). 310-311 (RY) contacts substrate.

Belongs to the terpene synthase family. In terms of assembly, monomer. Mg(2+) serves as cofactor.

It carries out the reaction (2E,6E)-farnesyl diphosphate = selina-4(15),7(11)-diene + diphosphate. The protein operates within secondary metabolite biosynthesis; terpenoid biosynthesis. In terms of biological role, catalyzes the conversion of (2E,6E)-farnesyl diphosphate (FPP) to yield the bicyclic sesquiterpene selina-4(15),7(11)-diene via a 1,10-cyclization, which requires the abstraction of the pyrophosphate from FPP leading to a (E,E)-germacradienyl cation. The only accepted substrate is (2E,6E)-farnesyl diphosphate (FPP). In Streptomyces pristinaespiralis (strain ATCC 25486 / DSM 40338 / CBS 914.69 / JCM 4507 / KCC S-0507 / NBRC 13074 / NRRL 2958 / 5647), this protein is Selina-4(15),7(11)-diene synthase ((2E,6E)-farnesyl diphosphate cyclizing).